The primary structure comprises 387 residues: Proline-rich protein 5 (387 aa).

Interaction with RICTOR regions lie at residues 10-96 (MSSP…LTKG) and 189-219 (HESR…YGLY). Residues 13–34 (PSLSDLGKREPGAAGTDERGTQ) are disordered. Positions 18–33 (LGKREPGAAGTDERGT) are enriched in basic and acidic residues. At S253 the chain carries Phosphoserine. Residues 262-387 (NPVAEHEAEG…EAPGGRPSVV (126 aa)) form a disordered region. Over residues 305 to 314 (SGTFRSSPTP) the composition is skewed to polar residues. S373 is subject to Phosphoserine.

This sequence belongs to the PROTOR family. Associated component of the mechanistic target of rapamycin complex 2 (mTORC2). Binds directly to MTOR and RICTOR within the TORC2 complex. Ubiquitously expressed. Expressed at high levels in kidney.

Its function is as follows. Associated subunit of mTORC2, which regulates cell growth and survival in response to hormonal signals. mTORC2 is activated by growth factors, but, in contrast to mTORC1, seems to be nutrient-insensitive. mTORC2 seems to function upstream of Rho GTPases to regulate the actin cytoskeleton, probably by activating one or more Rho-type guanine nucleotide exchange factors. PRR5 plays an important role in regulation of PDGFRB expression and in modulation of platelet-derived growth factor signaling. May act as a tumor suppressor in breast cancer. This Mus musculus (Mouse) protein is Proline-rich protein 5.